The sequence spans 464 residues: ATP synthase subunit beta 2 (464 aa).

153 to 160 (GGAGVGKT) provides a ligand contact to ATP.

The protein belongs to the ATPase alpha/beta chains family. In terms of assembly, F-type ATPases have 2 components, CF(1) - the catalytic core - and CF(0) - the membrane proton channel. CF(1) has five subunits: alpha(3), beta(3), gamma(1), delta(1), epsilon(1). CF(0) has three main subunits: a(1), b(2) and c(9-12). The alpha and beta chains form an alternating ring which encloses part of the gamma chain. CF(1) is attached to CF(0) by a central stalk formed by the gamma and epsilon chains, while a peripheral stalk is formed by the delta and b chains.

Its subcellular location is the cell inner membrane. It catalyses the reaction ATP + H2O + 4 H(+)(in) = ADP + phosphate + 5 H(+)(out). Its function is as follows. Produces ATP from ADP in the presence of a proton gradient across the membrane. The catalytic sites are hosted primarily by the beta subunits. The polypeptide is ATP synthase subunit beta 2 (Paraburkholderia xenovorans (strain LB400)).